A 199-amino-acid chain; its full sequence is Protein-methionine-sulfoxide reductase heme-binding subunit MsrQ (199 aa).

A run of 4 helical transmembrane segments spans residues 10–30 (WLKVCLHLAGFLPLLWLFWAI), 82–102 (LWCFVWATLHLTSYALLELGI), 116–136 (PYLTLGIISWLVLLALTLTST), and 153–173 (VVYLVAILAPIHYLWSVKILS).

The protein belongs to the MsrQ family. As to quaternary structure, heterodimer of a catalytic subunit (MsrP) and a heme-binding subunit (MsrQ). The cofactor is FMN. It depends on heme b as a cofactor.

It is found in the cell inner membrane. Its function is as follows. Part of the MsrPQ system that repairs oxidized periplasmic proteins containing methionine sulfoxide residues (Met-O), using respiratory chain electrons. Thus protects these proteins from oxidative-stress damage caused by reactive species of oxygen and chlorine generated by the host defense mechanisms. MsrPQ is essential for the maintenance of envelope integrity under bleach stress, rescuing a wide series of structurally unrelated periplasmic proteins from methionine oxidation, including the primary periplasmic chaperone SurA and the lipoprotein Pal. MsrQ provides electrons for reduction to the reductase catalytic subunit MsrP, using the quinone pool of the respiratory chain. The sequence is that of Protein-methionine-sulfoxide reductase heme-binding subunit MsrQ from Salmonella enteritidis PT4 (strain P125109).